A 485-amino-acid chain; its full sequence is Aspartyl/glutamyl-tRNA(Asn/Gln) amidotransferase subunit B (485 aa).

This sequence belongs to the GatB/GatE family. GatB subfamily. As to quaternary structure, heterotrimer of A, B and C subunits.

It carries out the reaction L-glutamyl-tRNA(Gln) + L-glutamine + ATP + H2O = L-glutaminyl-tRNA(Gln) + L-glutamate + ADP + phosphate + H(+). It catalyses the reaction L-aspartyl-tRNA(Asn) + L-glutamine + ATP + H2O = L-asparaginyl-tRNA(Asn) + L-glutamate + ADP + phosphate + 2 H(+). Allows the formation of correctly charged Asn-tRNA(Asn) or Gln-tRNA(Gln) through the transamidation of misacylated Asp-tRNA(Asn) or Glu-tRNA(Gln) in organisms which lack either or both of asparaginyl-tRNA or glutaminyl-tRNA synthetases. The reaction takes place in the presence of glutamine and ATP through an activated phospho-Asp-tRNA(Asn) or phospho-Glu-tRNA(Gln). This is Aspartyl/glutamyl-tRNA(Asn/Gln) amidotransferase subunit B from Anaplasma marginale (strain Florida).